We begin with the raw amino-acid sequence, 518 residues long: Bifunctional purine biosynthesis protein PurH (518 aa).

Positions 1–146 (MGRMALLSTS…KNHAHVTVLV (146 aa)) constitute an MGS-like domain.

It belongs to the PurH family.

The enzyme catalyses (6R)-10-formyltetrahydrofolate + 5-amino-1-(5-phospho-beta-D-ribosyl)imidazole-4-carboxamide = 5-formamido-1-(5-phospho-D-ribosyl)imidazole-4-carboxamide + (6S)-5,6,7,8-tetrahydrofolate. The catalysed reaction is IMP + H2O = 5-formamido-1-(5-phospho-D-ribosyl)imidazole-4-carboxamide. The protein operates within purine metabolism; IMP biosynthesis via de novo pathway; 5-formamido-1-(5-phospho-D-ribosyl)imidazole-4-carboxamide from 5-amino-1-(5-phospho-D-ribosyl)imidazole-4-carboxamide (10-formyl THF route): step 1/1. It participates in purine metabolism; IMP biosynthesis via de novo pathway; IMP from 5-formamido-1-(5-phospho-D-ribosyl)imidazole-4-carboxamide: step 1/1. The chain is Bifunctional purine biosynthesis protein PurH from Thermosynechococcus vestitus (strain NIES-2133 / IAM M-273 / BP-1).